The following is a 264-amino-acid chain: Thymidylate synthase (264 aa).

Residue arginine 21 coordinates dUMP. Histidine 51 is a (6R)-5,10-methylene-5,6,7,8-tetrahydrofolate binding site. Position 126 to 127 (126 to 127 (RR)) interacts with dUMP. The Nucleophile role is filled by cysteine 146. Residues 166–169 (RSAD), asparagine 177, and 207–209 (HLY) each bind dUMP. Residue aspartate 169 participates in (6R)-5,10-methylene-5,6,7,8-tetrahydrofolate binding. Residue alanine 263 coordinates (6R)-5,10-methylene-5,6,7,8-tetrahydrofolate.

It belongs to the thymidylate synthase family. Bacterial-type ThyA subfamily. As to quaternary structure, homodimer.

The protein resides in the cytoplasm. The catalysed reaction is dUMP + (6R)-5,10-methylene-5,6,7,8-tetrahydrofolate = 7,8-dihydrofolate + dTMP. The protein operates within pyrimidine metabolism; dTTP biosynthesis. Catalyzes the reductive methylation of 2'-deoxyuridine-5'-monophosphate (dUMP) to 2'-deoxythymidine-5'-monophosphate (dTMP) while utilizing 5,10-methylenetetrahydrofolate (mTHF) as the methyl donor and reductant in the reaction, yielding dihydrofolate (DHF) as a by-product. This enzymatic reaction provides an intracellular de novo source of dTMP, an essential precursor for DNA biosynthesis. In Chelativorans sp. (strain BNC1), this protein is Thymidylate synthase.